The following is a 496-amino-acid chain: Transmembrane transporter swnT (496 aa).

The next 5 membrane-spanning stretches (helical) occupy residues Leu40–Leu60, Val72–Glu92, Ala124–Leu144, Trp162–Glu182, and Ala191–Ala211. N-linked (GlcNAc...) asparagine glycosylation occurs at Asn225. The next 6 membrane-spanning stretches (helical) occupy residues Leu270 to Val290, Ala314 to Ile334, Pro368 to Ala388, Leu396 to Leu416, Gly434 to Phe454, and Tyr467 to Ala487.

This sequence belongs to the amino acid-polyamine-organocation (APC) superfamily. Amino acid/choline transporter (ACT) (TC 2.A.3.4) family.

The protein localises to the membrane. Transmembrane transporter; part of the gene cluster that mediates the biosynthesis of swainsonine, a cytotoxic fungal alkaloid and a potential cancer therapy drug. Does not mediate the secretion of SW and the exact role of swnT in SW biosynthesis remains to be determined. The chain is Transmembrane transporter swnT from Metarhizium robertsii (strain ARSEF 23 / ATCC MYA-3075) (Metarhizium anisopliae (strain ARSEF 23)).